The following is a 355-amino-acid chain: Heavy metal-associated isoprenylated plant protein 7 (355 aa).

Residues 1–58 (MGEEEKKPEAAEEKKMEEKKPEEKKEGEDKKVDAEKKGEDSDKKPQEGESNKDSKEDS) are compositionally biased toward basic and acidic residues. Residues 1–74 (MGEEEKKPEA…APAPPPPPQE (74 aa)) are disordered. A compositionally biased stretch (pro residues) spans 63–73 (PEAPAPPPPPQ). HMA domains follow at residues 72-136 (PQEV…HRQV) and 170-234 (VVTV…KHAA). Positions 83 and 86 each coordinate a metal cation. Positions 132–157 (THRQVQLLSPIPPPPPPPEKKAEEDK) are disordered. C181 and C184 together coordinate a metal cation. The tract at residues 235-308 (IMKIDPPPPP…GGGEEEGKVV (74 aa)) is disordered. Positions 254 to 293 (EGEKKEEEKGEGESKGEEGKDDKAKTDEEKKEGDGGKGEG) are enriched in basic and acidic residues. A Cysteine methyl ester modification is found at C352. Residue C352 is the site of S-farnesyl cysteine attachment. The propeptide at 353–355 (TVM) is removed in mature form.

It belongs to the HIPP family. Efficiently farnesylated in vitro.

Functionally, heavy-metal-binding protein. Binds zinc, copper and nickel in a reversible manner. The sequence is that of Heavy metal-associated isoprenylated plant protein 7 from Arabidopsis thaliana (Mouse-ear cress).